A 318-amino-acid polypeptide reads, in one-letter code: Peroxisomal and mitochondrial division factor 1 (318 aa).

Positions 1-39 (MADVEDRAAKGISDYDQGGVKTTELERKIEDMENKNQEL) are disordered. At 1–291 (MADVEDRAAK…QKGSLEAEYQ (291 aa)) the chain is on the cytoplasmic side. Positions 19-260 (GVKTTELERK…KKVEEGNKTV (242 aa)) form a coiled coil. Basic and acidic residues predominate over residues 23 to 39 (TELERKIEDMENKNQEL). A helical membrane pass occupies residues 292–312 (WPVVAAGSVGAAGLVAATFFV). The Mitochondrial intermembrane segment spans residues 313–318 (CYSKLR).

In terms of assembly, homodimer. Interacts with PMD2.

Its subcellular location is the peroxisome membrane. The protein localises to the mitochondrion outer membrane. Involved in morphogenesis and proliferation of peroxisomes and mitochondria, independently from the previously defined pathway controlled by the FIS1-DRP3 complex. The chain is Peroxisomal and mitochondrial division factor 1 from Arabidopsis thaliana (Mouse-ear cress).